The primary structure comprises 760 residues: Photosystem I P700 chlorophyll a apoprotein A1 (760 aa).

Residues 1-22 (MTISPPESGEKDKKILESPVKA) are disordered. The segment covering 8 to 22 (SGEKDKKILESPVKA) has biased composition (basic and acidic residues). The next 8 membrane-spanning stretches (helical) occupy residues 76–99 (IFSAHFGHLAVIFIWMSAAFFHGA), 162–185 (LMALAIGAVVMAALMLHAGIFHYH), 201–225 (MNHHLAGLLGLGSLAWAGHTIHIGA), 309–327 (IAHHHLAIAVLFIIAGHMY), 368–391 (RHAQLSVNLALLGSLSIIISHHMY), 407–433 (LGLFTHHMWIGGLFIVGAGAHAGIAMV), 455–477 (ALISHLNWVCMWLGFHSFGLYIH), and 551–569 (LMIHHIHAFQIHVTVLILL). [4Fe-4S] cluster contacts are provided by Cys-593 and Cys-602. Helical transmembrane passes span 609-630 (HVFLALFWMYNCLSIVIFHFSW) and 674-696 (ISMYGLMFLGAHFIWAFSLMFLF). His-685 contributes to the divinylchlorophyll a' binding site. Positions 693 and 701 each coordinate divinyl chlorophyll a. Position 702 (Trp-702) interacts with phylloquinone. The chain crosses the membrane as a helical span at residues 734-754 (AVGVTHFLVGGIATTWAFFHA).

The protein belongs to the PsaA/PsaB family. In terms of assembly, the PsaA/B heterodimer binds the P700 divinyl chlorophyll special pair and subsequent electron acceptors. PSI consists of a core antenna complex that captures photons, and an electron transfer chain that converts photonic excitation into a charge separation. The cyanobacterial PSI reaction center is composed of one copy each of PsaA,B,C,D,E,F,I,J,K,L,M and X, and forms trimeric complexes. PSI electron transfer chain: 5 divinyl chlorophyll a, 1 divinyl chlorophyll a', 2 phylloquinones and 3 4Fe-4S clusters. PSI core antenna: 90 divinyl chlorophyll a, 22 carotenoids, 3 phospholipids and 1 galactolipid. P700 is a divinyl chlorophyll a/divinyl chlorophyll a' dimer, A0 is one or more divinyl chlorophyll a, A1 is one or both phylloquinones and FX is a shared 4Fe-4S iron-sulfur center. is required as a cofactor.

It is found in the cellular thylakoid membrane. The catalysed reaction is reduced [plastocyanin] + hnu + oxidized [2Fe-2S]-[ferredoxin] = oxidized [plastocyanin] + reduced [2Fe-2S]-[ferredoxin]. PsaA and PsaB bind P700, the primary electron donor of photosystem I (PSI), as well as the electron acceptors A0, A1 and FX. PSI is a plastocyanin/cytochrome c6-ferredoxin oxidoreductase, converting photonic excitation into a charge separation, which transfers an electron from the donor P700 chlorophyll pair to the spectroscopically characterized acceptors A0, A1, FX, FA and FB in turn. Oxidized P700 is reduced on the lumenal side of the thylakoid membrane by plastocyanin or cytochrome c6. The chain is Photosystem I P700 chlorophyll a apoprotein A1 from Prochlorococcus marinus (strain MIT 9515).